Consider the following 599-residue polypeptide: Sulfite reductase [NADPH] flavoprotein alpha-component (599 aa).

Residues 64–202 form the Flavodoxin-like domain; it reads ITIISASQTG…AASEWRARVV (139 aa). FMN-binding positions include 70–75, 117–120, and 153–162; these read SQTGNA, STQG, and LGDSSYEFFC. The FAD-binding FR-type domain occupies 234–448; it reads DAPLVASLSV…IEHNDNFRLP (215 aa). Residues Thr-322, Ala-356, 386-389, 404-406, Tyr-410, and 419-422 contribute to the FAD site; these read RLYS, TVG, and GGAS. NADP(+) contacts are provided by residues 519 to 520, 525 to 529, and Asp-561; these read SR and KVYVQ. Tyr-599 is a binding site for FAD.

Belongs to the NADPH-dependent sulphite reductase flavoprotein subunit CysJ family. It in the N-terminal section; belongs to the flavodoxin family. This sequence in the C-terminal section; belongs to the flavoprotein pyridine nucleotide cytochrome reductase family. In terms of assembly, alpha(8)-beta(8). The alpha component is a flavoprotein, the beta component is a hemoprotein. It depends on FAD as a cofactor. The cofactor is FMN.

The enzyme catalyses hydrogen sulfide + 3 NADP(+) + 3 H2O = sulfite + 3 NADPH + 4 H(+). The protein operates within sulfur metabolism; hydrogen sulfide biosynthesis; hydrogen sulfide from sulfite (NADPH route): step 1/1. In terms of biological role, component of the sulfite reductase complex that catalyzes the 6-electron reduction of sulfite to sulfide. This is one of several activities required for the biosynthesis of L-cysteine from sulfate. The flavoprotein component catalyzes the electron flow from NADPH -&gt; FAD -&gt; FMN to the hemoprotein component. The chain is Sulfite reductase [NADPH] flavoprotein alpha-component from Shigella dysenteriae serotype 1 (strain Sd197).